The chain runs to 115 residues: Large ribosomal subunit protein bL19 (115 aa).

It belongs to the bacterial ribosomal protein bL19 family.

Functionally, this protein is located at the 30S-50S ribosomal subunit interface and may play a role in the structure and function of the aminoacyl-tRNA binding site. This is Large ribosomal subunit protein bL19 from Brevibacillus brevis (strain 47 / JCM 6285 / NBRC 100599).